A 255-amino-acid chain; its full sequence is Taurine import ATP-binding protein TauB (255 aa).

Residues 2 to 229 form the ABC transporter domain; it reads LQISHLYADY…RFVAGESSRS (228 aa). 34-41 lines the ATP pocket; that stretch reads GPSGCGKT.

This sequence belongs to the ABC transporter superfamily. Taurine importer (TC 3.A.1.17.1) family. In terms of assembly, the complex is composed of two ATP-binding proteins (TauB), two transmembrane proteins (TauC) and a solute-binding protein (TauA).

The protein localises to the cell inner membrane. The enzyme catalyses taurine(out) + ATP + H2O = taurine(in) + ADP + phosphate + H(+). Functionally, part of the ABC transporter complex TauABC involved in taurine import. Responsible for energy coupling to the transport system. This is Taurine import ATP-binding protein TauB from Shigella flexneri.